A 182-amino-acid polypeptide reads, in one-letter code: Putative manganese efflux pump MntP (182 aa).

The next 6 helical transmembrane spans lie at 6-26 (LIPLIIMAFALGMDAFSVSLG), 37-57 (ILYIGVTIGIFHIIMPFIGMV), 71-91 (HFAGAILLIGLGFYIVYSSIL), 101-121 (IGISLFVFAFGVSIDSFSVGL), 131-151 (VITILLFGFISMLLAWTGLFI), and 162-182 (YGEIVGGIILVGFGLYLLFPI).

It belongs to the MntP (TC 9.B.29) family.

Its subcellular location is the cell membrane. In terms of biological role, probably functions as a manganese efflux pump. The polypeptide is Putative manganese efflux pump MntP (Bacillus cereus (strain Q1)).